The following is a 195-amino-acid chain: Cysteine/O-acetylserine efflux protein (195 aa).

The Periplasmic portion of the chain corresponds to 1–9; it reads MTPMLLSAF. A helical transmembrane segment spans residues 10–32; it reads WTYTLITALTPGPNNILALSAAT. Over 33-46 the chain is Cytoplasmic; that stretch reads AHGFRQSIRVLAGM. A helical membrane pass occupies residues 47–67; the sequence is SLGFLVVMLLCAGIAFSLAVI. Over 68-69 the chain is Periplasmic; that stretch reads DP. A helical membrane pass occupies residues 70 to 90; the sequence is AIIHLLSWVGAAYILWLAWKI. At 91-104 the chain is on the cytoplasmic side; that stretch reads ATSPAADEKVRPKP. Residues 105 to 125 form a helical membrane-spanning segment; the sequence is VGFWVSFGLQFVNVKIILYGI. Over 126 to 141 the chain is Periplasmic; that stretch reads TALSTFVLPQTQALNW. A helical membrane pass occupies residues 142–162; it reads VIGVSILLALIGTFGNVCWAL. The Cytoplasmic portion of the chain corresponds to 163–176; that stretch reads AGHLFQRAFRHYGR. The helical transmembrane segment at 177 to 194 threads the bilayer; that stretch reads QLNIILALLLVYCAVRIF. Tyr-195 is a topological domain (periplasmic).

This sequence belongs to the Rht family.

It localises to the cell inner membrane. The catalysed reaction is O-acetyl-L-serine(in) = O-acetyl-L-serine(out). It catalyses the reaction L-cysteine(in) = L-cysteine(out). Exporter of O-acetylserine (OAS) and cysteine. This is Cysteine/O-acetylserine efflux protein (eamB) from Salmonella paratyphi A (strain ATCC 9150 / SARB42).